The sequence spans 473 residues: Cephalotoxin-like protein (473 aa).

An N-terminal signal peptide occupies residues 1–21 (RWLGWQKFCWISCLFSSISSG). Coiled-coil stretches lie at residues 40-60 (AINA…EALK) and 116-147 (LINE…ADTA).

In terms of tissue distribution, component of the acid-insoluble and acid-soluble organic matrix of the aragonitic skeleton (at protein level).

It is found in the secreted. The sequence is that of Cephalotoxin-like protein from Acropora millepora (Staghorn coral).